We begin with the raw amino-acid sequence, 28 residues long: Aryl acylamidase (28 aa).

As to quaternary structure, homodimer.

It carries out the reaction an anilide + H2O = aniline + a carboxylate + H(+). This is Aryl acylamidase from Nocardia globerula.